Consider the following 488-residue polypeptide: Malonate-semialdehyde dehydrogenase (488 aa).

7 residues coordinate NAD(+): Ala150, Phe152, Lys176, Glu179, Arg180, Ser229, and Thr251. The active-site Nucleophile is Cys284. Glu382 contacts NAD(+).

The protein belongs to the aldehyde dehydrogenase family. IolA subfamily. As to quaternary structure, homotetramer.

It catalyses the reaction 3-oxopropanoate + NAD(+) + CoA + H2O = hydrogencarbonate + acetyl-CoA + NADH + H(+). It carries out the reaction 2-methyl-3-oxopropanoate + NAD(+) + CoA + H2O = propanoyl-CoA + hydrogencarbonate + NADH + H(+). Its pathway is polyol metabolism; myo-inositol degradation into acetyl-CoA; acetyl-CoA from myo-inositol: step 7/7. In terms of biological role, catalyzes the oxidation of malonate semialdehyde (MSA) and methylmalonate semialdehyde (MMSA) into acetyl-CoA and propanoyl-CoA, respectively. Is involved in a myo-inositol catabolic pathway. Bicarbonate, and not CO2, is the end-product of the enzymatic reaction. This is Malonate-semialdehyde dehydrogenase from Listeria monocytogenes serovar 1/2a (strain ATCC BAA-679 / EGD-e).